The chain runs to 920 residues: Urea transporter 2 (920 aa).

The tract at residues 25 to 57 is disordered; that stretch reads FTSPSWPSTSPDTHPALPLLEMPEEKDLRSSNE. The segment covering 26-39 has biased composition (low complexity); that stretch reads TSPSWPSTSPDTHP. The segment covering 47–57 has biased composition (basic and acidic residues); that stretch reads PEEKDLRSSNE. 9 helical membrane passes run 151–170, 176–196, 204–224, 233–253, 272–291, 302–322, 346–366, 370–390, and 392–412; these read WWTI…ALAL, AIAS…MAVF, WWLL…SSAL, LPVF…ATGH, ITWT…VGVG, GGVF…HAAI, WSYN…ALTW, LLAL…SNIM, and VVGV…FLLL. The tract at residues 446 to 467 is disordered; the sequence is EKAPSGGGGEHPPTAGPKVEEG. Phosphoserine is present on Ser477. 4 helical membrane-spanning segments follow: residues 600 to 620, 638 to 658, 666 to 686, and 695 to 715; these read GILI…SGCL, AIAA…MAVF, WWLL…SSAL, and LPVF…ATGH. The N-linked (GlcNAc...) asparagine glycan is linked to Asn733. The next 4 membrane-spanning stretches (helical) occupy residues 764–784, 803–823, 832–852, and 854–874; these read GGIF…HAAI, IYFG…GGMF, LLAI…ANML, and VFGL…FLLL.

Belongs to the urea transporter family. In terms of assembly, interacts with SNAPIN which enhances its urea transport activity. Epressed in the inner medulla of the kidney (at protein level). As to expression, expressed in the kidney.

The protein resides in the apical cell membrane. The protein localises to the cell membrane. The catalysed reaction is urea(in) = urea(out). With respect to regulation, inhibited by phloretin. In terms of biological role, mediates the transport of urea driven by a concentration gradient across the cell membrane of the renal inner medullary collecting duct which is critical to the urinary concentrating mechanism. Its function is as follows. Mediates the transport of urea driven by a concentration gradient across the cell membrane of the kidney inner medullary collecting duct which is critical to the urinary concentrating mechanism. The polypeptide is Urea transporter 2 (SLC14A2) (Homo sapiens (Human)).